We begin with the raw amino-acid sequence, 156 residues long: Arginine repressor (156 aa).

The protein belongs to the ArgR family.

It localises to the cytoplasm. The protein operates within amino-acid biosynthesis; L-arginine biosynthesis [regulation]. Its function is as follows. Regulates arginine biosynthesis genes. The polypeptide is Arginine repressor (Proteus mirabilis (strain HI4320)).